The primary structure comprises 402 residues: FMN-dependent alpha-hydroxy acid dehydrogenase qulF (402 aa).

Residues 22–394 (RLPAITTNPT…NRDCMRRISY (373 aa)) enclose the FMN hydroxy acid dehydrogenase domain. Tyrosine 48 serves as a coordination point for a 2-oxocarboxylate. FMN-binding residues include serine 130 and glutamine 152. 2 residues coordinate a 2-oxocarboxylate: tyrosine 154 and arginine 189. Lysine 265 is an FMN binding site. Histidine 289 functions as the Proton acceptor in the catalytic mechanism. Arginine 292 lines the a 2-oxocarboxylate pocket. FMN is bound by residues 320–324 (DSGVR) and 343–344 (GR).

Belongs to the FMN-dependent alpha-hydroxy acid dehydrogenase family. FMN is required as a cofactor.

Its function is as follows. FMN-dependent alpha-hydroxy acid dehydrogenase; part of the gene cluster that mediates the biosynthesis of quinolactacin A2 (QUL A2), a fungal alkaloid that features a quinolone-gamma-lactam hybrid, which is a potential pharmacophore for the treatment of cancer and Alzheimer's disease. The quinolone-gamma-lactam hybrid scaffold is synthesized from the combination of L-isoleucine (L-Ile) and the nonproteinogenic amino acid L-kynurenine, followed by quinolone cyclization, oxidative decarboxylation, and lactam formation. Additionally, the N-methyl group is derived from methionine, which might be catalyzed by an S-adenosylmethionine (SAM)-dependent methyltransferase. Bioconversion of L-tryptophan to L-kynurenine could be catalyzed by the indoleamine-2,3-dioxygenase (IDO) qulI to produce an unstable product, N-formyl-L-kynurenine, followed by kynurenine formamidase catalyzed hydrolysis. QulM then acts as a methyltransferase that methylates L-kynurenine at the N-4 position. The FMN-dependent alpha-hydroxy acid dehydrogenase qulF than functions as an oxidative decarboxylase which converts N-methylkynurenine into 2-aminobenzoylacetamide via 2 tandem reactions, including dehydrogenation and decarboxylation. An amidase located outside of the qul gene cluster further produces the unstable beta-keto acid precursor N-methyl-2-aminobenzoylacetate, which could be spontaneously dehydrated to form N-methyl-4-hydroxy-2-quinolone. The NRPS qulB is able to incorporate N-methyl-2-aminobenzoylacetate and efficiently compete with the spontaneous reaction. By further extending the beta-keto acid with L-Ile, qulA performs a Dieckmann condensation to form the gamma-lactam ring and release a 4-ketopyrrolidinone intermediate from the assembly line. This intermediate could plausibly further undergo a spontaneous cyclization to yield the final quinolone-gamma-lactam hybrid structure. This chain is FMN-dependent alpha-hydroxy acid dehydrogenase qulF, found in Penicillium citrinum.